The primary structure comprises 299 residues: Acidic endochitinase Pun g 14, amyloplastic (299 aa).

The transit peptide at 1-26 (MAKTLPFSRALLLSLSILLVARAISA) directs the protein to the amyloplast. Residues 27–299 (GDIAIYWGQN…TYSTTIKDQV (273 aa)) enclose the GH18 domain. 2 disulfide bridges follow: Cys46-Cys93 and Cys76-Cys83. Glu153 acts as the Proton donor in catalysis. A disulfide bridge connects residues Cys185 and Cys216.

It belongs to the glycosyl hydrolase 18 family. Chitinase class III subfamily. Monomer. As to expression, highly expressed in seeds and to a lesser extent in the skin of the pomegranate fruit (at protein level). Not expressed in leaves or flesh of the fruit (at protein level).

It localises to the plastid. Its subcellular location is the amyloplast. It carries out the reaction Random endo-hydrolysis of N-acetyl-beta-D-glucosaminide (1-&gt;4)-beta-linkages in chitin and chitodextrins.. Its activity is regulated as follows. Activity is not affected by addition of 10 mM Ca(2+) or removal of Ca(2+). Hydrolyzes chitin. Probable calcium storage protein of the seeds. Binds calcium ions with high capacity and low affinity. Involved in seed germination. The protein is Acidic endochitinase Pun g 14, amyloplastic of Punica granatum (Pomegranate).